We begin with the raw amino-acid sequence, 675 residues long: Potassium-transporting ATPase ATP-binding subunit (675 aa).

4 helical membrane-spanning segments follow: residues 34–54 (IMFV…FPDI), 65–85 (LITI…SEAF), 216–236 (IALF…IVTL), and 245–265 (LILP…TTIG). The active-site 4-aspartylphosphate intermediate is the aspartate 304. Residues aspartate 341, glutamate 345, 372-379 (FTAETRMS), and lysine 390 contribute to the ATP site. Residues aspartate 513 and aspartate 517 each contribute to the Mg(2+) site. 3 helical membrane-spanning segments follow: residues 569–591 (ALTT…ALMM), 611–631 (AIIS…PIAM), and 644–664 (IFIN…FLGI).

Belongs to the cation transport ATPase (P-type) (TC 3.A.3) family. Type IA subfamily. The system is composed of three essential subunits: KdpA, KdpB and KdpC.

The protein resides in the cell membrane. It catalyses the reaction K(+)(out) + ATP + H2O = K(+)(in) + ADP + phosphate + H(+). In terms of biological role, part of the high-affinity ATP-driven potassium transport (or Kdp) system, which catalyzes the hydrolysis of ATP coupled with the electrogenic transport of potassium into the cytoplasm. This subunit is responsible for energy coupling to the transport system and for the release of the potassium ions to the cytoplasm. The chain is Potassium-transporting ATPase ATP-binding subunit from Staphylococcus aureus (strain Newman).